We begin with the raw amino-acid sequence, 505 residues long: Glycerol kinase (505 aa).

Residue threonine 14 participates in ADP binding. The ATP site is built by threonine 14, threonine 15, and serine 16. Threonine 14 contacts sn-glycerol 3-phosphate. Residue arginine 18 coordinates ADP. Positions 84, 85, 136, and 246 each coordinate sn-glycerol 3-phosphate. The glycerol site is built by arginine 84, glutamate 85, tyrosine 136, aspartate 246, and glutamine 247. Residues threonine 268 and glycine 311 each coordinate ADP. 4 residues coordinate ATP: threonine 268, glycine 311, glutamine 315, and glycine 412. Residues glycine 412 and asparagine 416 each contribute to the ADP site.

It belongs to the FGGY kinase family.

The catalysed reaction is glycerol + ATP = sn-glycerol 3-phosphate + ADP + H(+). Its pathway is polyol metabolism; glycerol degradation via glycerol kinase pathway; sn-glycerol 3-phosphate from glycerol: step 1/1. Its activity is regulated as follows. Inhibited by fructose 1,6-bisphosphate (FBP). In terms of biological role, key enzyme in the regulation of glycerol uptake and metabolism. Catalyzes the phosphorylation of glycerol to yield sn-glycerol 3-phosphate. The protein is Glycerol kinase of Vibrio vulnificus (strain CMCP6).